The following is a 362-amino-acid chain: UDP-N-acetylglucosamine--N-acetylmuramyl-(pentapeptide) pyrophosphoryl-undecaprenol N-acetylglucosamine transferase (362 aa).

Residues 10-12 (TAG), Asn124, Arg161, Ser195, and Gln291 contribute to the UDP-N-acetyl-alpha-D-glucosamine site.

This sequence belongs to the glycosyltransferase 28 family. MurG subfamily.

Its subcellular location is the cell membrane. It catalyses the reaction di-trans,octa-cis-undecaprenyl diphospho-N-acetyl-alpha-D-muramoyl-L-alanyl-D-glutamyl-meso-2,6-diaminopimeloyl-D-alanyl-D-alanine + UDP-N-acetyl-alpha-D-glucosamine = di-trans,octa-cis-undecaprenyl diphospho-[N-acetyl-alpha-D-glucosaminyl-(1-&gt;4)]-N-acetyl-alpha-D-muramoyl-L-alanyl-D-glutamyl-meso-2,6-diaminopimeloyl-D-alanyl-D-alanine + UDP + H(+). The protein operates within cell wall biogenesis; peptidoglycan biosynthesis. Functionally, cell wall formation. Catalyzes the transfer of a GlcNAc subunit on undecaprenyl-pyrophosphoryl-MurNAc-pentapeptide (lipid intermediate I) to form undecaprenyl-pyrophosphoryl-MurNAc-(pentapeptide)GlcNAc (lipid intermediate II). This Streptomyces collinus protein is UDP-N-acetylglucosamine--N-acetylmuramyl-(pentapeptide) pyrophosphoryl-undecaprenol N-acetylglucosamine transferase.